A 148-amino-acid chain; its full sequence is HTH-type transcriptional regulator BilQ (148 aa).

The region spanning 1–140 is the HTH marR-type domain; the sequence is MDFKNLQYES…LVKNLHVVKD (140 aa). The segment at residues 54-77 is a DNA-binding region (H-T-H motif); the sequence is LNDVSTEFEVDKAHTTRTISRLEQ.

Transcription regulator that regulates expression of the bilirubin reductase operon (bilQ, bilR and bilS). This Clostridioides difficile (strain CD3) protein is HTH-type transcriptional regulator BilQ.